Consider the following 299-residue polypeptide: Tyrosine recombinase XerC (299 aa).

In terms of domain architecture, Core-binding (CB) spans 1-85 (MEQHLDAYCM…AVRGFYKYLN (85 aa)). Residues 106–285 (RLPKTLDTDR…DFQHLATVYD (180 aa)) enclose the Tyr recombinase domain. Residues Arg146, Lys170, His237, Arg240, and His263 contribute to the active site. The O-(3'-phospho-DNA)-tyrosine intermediate role is filled by Tyr272.

This sequence belongs to the 'phage' integrase family. XerC subfamily. In terms of assembly, forms a cyclic heterotetrameric complex composed of two molecules of XerC and two molecules of XerD.

The protein resides in the cytoplasm. Functionally, site-specific tyrosine recombinase, which acts by catalyzing the cutting and rejoining of the recombining DNA molecules. The XerC-XerD complex is essential to convert dimers of the bacterial chromosome into monomers to permit their segregation at cell division. It also contributes to the segregational stability of plasmids. The protein is Tyrosine recombinase XerC of Pseudomonas savastanoi pv. phaseolicola (strain 1448A / Race 6) (Pseudomonas syringae pv. phaseolicola (strain 1448A / Race 6)).